The chain runs to 389 residues: Large envelope protein (389 aa).

2 stretches are compositionally biased toward polar residues: residues 1–10 and 85–95; these read MGQNLSTSNP and STNRQTGRQPT. Disordered regions lie at residues 1–54 and 73–106; these read MGQN…AFGL and ILHT…DTHP. The N-myristoyl glycine; by host moiety is linked to residue G2. The tract at residues 2–108 is pre-S1; it reads GQNLSTSNPL…PPLRDTHPQA (107 aa). The pre-S stretch occupies residues 2–163; the sequence is GQNLSTSNPL…FSRIGDPVTN (162 aa). At 2–170 the chain is on the virion surface; in external conformation side; that stretch reads GQNLSTSNPL…VTNMENITSG (169 aa). The Intravirion; in internal conformation portion of the chain corresponds to 2-242; sequence GQNLSTSNPL…PGYRWMCLRG (241 aa). The pre-S2 stretch occupies residues 109 to 163; it reads VQWNSTTFHQTLQDPRVRGLYFPAGGSSSGTVNPVPTTASPLSSIFSRIGDPVTN. The helical transmembrane segment at 171–191 threads the bilayer; sequence FLGPLLVLQAGFFLLTRILTI. Over 192 to 242 the chain is Intravirion; in external conformation; that stretch reads PQSLDSWWTSLNFRGGTTVCLGQNSQSPTSNHSPTSCPPTCPGYRWMCLRG. Residues 243–263 form a helical membrane-spanning segment; the sequence is FIIFLFILLLCLIFLLVLLEY. Residues 264 to 337 lie on the Virion surface side of the membrane; the sequence is QGMLHVCPLI…WASVRFSWLS (74 aa). N309 carries N-linked (GlcNAc...) asparagine; by host glycosylation. The chain crosses the membrane as a helical span at residues 338 to 358; the sequence is LLVPFVQWFVGLSPTVWLSAI. Residues 359–364 are Intravirion-facing; it reads WMMWYW. Residues 365–387 traverse the membrane as a helical segment; it reads GPSLYSILSPFLPLLPIFFCLWV. Residues 388–389 lie on the Virion surface side of the membrane; the sequence is YI.

It belongs to the orthohepadnavirus major surface antigen family. In terms of assembly, li-HBsAg interacts with capsid protein and with HDV Large delta antigen. Isoform M associates with host chaperone CANX through its pre-S2 N glycan. This association may be essential for M proper secretion. Post-translationally, isoform M is N-terminally acetylated by host at a ratio of 90%, and N-glycosylated by host at the pre-S2 region. Myristoylated.

Its subcellular location is the virion membrane. The large envelope protein exists in two topological conformations, one which is termed 'external' or Le-HBsAg and the other 'internal' or Li-HBsAg. In its external conformation the protein attaches the virus to cell receptors and thereby initiating infection. This interaction determines the species specificity and liver tropism. This attachment induces virion internalization predominantly through caveolin-mediated endocytosis. The large envelope protein also assures fusion between virion membrane and endosomal membrane. In its internal conformation the protein plays a role in virion morphogenesis and mediates the contact with the nucleocapsid like a matrix protein. Functionally, the middle envelope protein plays an important role in the budding of the virion. It is involved in the induction of budding in a nucleocapsid independent way. In this process the majority of envelope proteins bud to form subviral lipoprotein particles of 22 nm of diameter that do not contain a nucleocapsid. This Homo sapiens (Human) protein is Large envelope protein.